The chain runs to 429 residues: Histidinol dehydrogenase (429 aa).

NAD(+)-binding residues include Tyr-130, Gln-191, and Asn-214. Positions 237, 259, and 262 each coordinate substrate. Positions 259 and 262 each coordinate Zn(2+). Residues Glu-327 and His-328 each act as proton acceptor in the active site. The substrate site is built by His-328, Asp-361, Glu-415, and His-420. Asp-361 is a Zn(2+) binding site. A Zn(2+)-binding site is contributed by His-420.

The protein belongs to the histidinol dehydrogenase family. Zn(2+) serves as cofactor.

It catalyses the reaction L-histidinol + 2 NAD(+) + H2O = L-histidine + 2 NADH + 3 H(+). It functions in the pathway amino-acid biosynthesis; L-histidine biosynthesis; L-histidine from 5-phospho-alpha-D-ribose 1-diphosphate: step 9/9. Catalyzes the sequential NAD-dependent oxidations of L-histidinol to L-histidinaldehyde and then to L-histidine. In Nitrobacter winogradskyi (strain ATCC 25391 / DSM 10237 / CIP 104748 / NCIMB 11846 / Nb-255), this protein is Histidinol dehydrogenase.